A 245-amino-acid chain; its full sequence is 1-(5-phosphoribosyl)-5-[(5-phosphoribosylamino)methylideneamino] imidazole-4-carboxamide isomerase (245 aa).

The active-site Proton acceptor is the aspartate 7. The active-site Proton donor is the aspartate 129.

Belongs to the HisA/HisF family.

It localises to the cytoplasm. The catalysed reaction is 1-(5-phospho-beta-D-ribosyl)-5-[(5-phospho-beta-D-ribosylamino)methylideneamino]imidazole-4-carboxamide = 5-[(5-phospho-1-deoxy-D-ribulos-1-ylimino)methylamino]-1-(5-phospho-beta-D-ribosyl)imidazole-4-carboxamide. It participates in amino-acid biosynthesis; L-histidine biosynthesis; L-histidine from 5-phospho-alpha-D-ribose 1-diphosphate: step 4/9. The protein is 1-(5-phosphoribosyl)-5-[(5-phosphoribosylamino)methylideneamino] imidazole-4-carboxamide isomerase of Shewanella sp. (strain W3-18-1).